Here is a 244-residue protein sequence, read N- to C-terminus: 3-deoxy-manno-octulosonate cytidylyltransferase (244 aa).

The protein belongs to the KdsB family.

The protein localises to the cytoplasm. The enzyme catalyses 3-deoxy-alpha-D-manno-oct-2-ulosonate + CTP = CMP-3-deoxy-beta-D-manno-octulosonate + diphosphate. It functions in the pathway nucleotide-sugar biosynthesis; CMP-3-deoxy-D-manno-octulosonate biosynthesis; CMP-3-deoxy-D-manno-octulosonate from 3-deoxy-D-manno-octulosonate and CTP: step 1/1. Its pathway is bacterial outer membrane biogenesis; lipopolysaccharide biosynthesis. Activates KDO (a required 8-carbon sugar) for incorporation into bacterial lipopolysaccharide in Gram-negative bacteria. In Wolinella succinogenes (strain ATCC 29543 / DSM 1740 / CCUG 13145 / JCM 31913 / LMG 7466 / NCTC 11488 / FDC 602W) (Vibrio succinogenes), this protein is 3-deoxy-manno-octulosonate cytidylyltransferase.